We begin with the raw amino-acid sequence, 177 residues long: Large ribosomal subunit protein uL6 (177 aa).

Belongs to the universal ribosomal protein uL6 family. Part of the 50S ribosomal subunit.

Functionally, this protein binds to the 23S rRNA, and is important in its secondary structure. It is located near the subunit interface in the base of the L7/L12 stalk, and near the tRNA binding site of the peptidyltransferase center. This Brucella anthropi (strain ATCC 49188 / DSM 6882 / CCUG 24695 / JCM 21032 / LMG 3331 / NBRC 15819 / NCTC 12168 / Alc 37) (Ochrobactrum anthropi) protein is Large ribosomal subunit protein uL6.